Here is a 362-residue protein sequence, read N- to C-terminus: Atypical chemokine receptor 3 (362 aa).

Topologically, residues 1–47 (MDVHLFDYAEPGNYSDINWPCNSSDCIVVDTVQCPTMPNKNVLLYTL) are extracellular. N-linked (GlcNAc...) asparagine glycans are attached at residues Asn-13 and Asn-22. A helical membrane pass occupies residues 48–68 (SFIYIFIFVIGMIANSVVVWV). The Cytoplasmic segment spans residues 69–81 (NIQAKTTGYDTHC). A helical transmembrane segment spans residues 82–102 (YILNLAIADLWVVITIPVWVV). Topologically, residues 103 to 118 (SLVQHNQWPMGELTCK) are extracellular. A disulfide bond links Cys-117 and Cys-196. A helical membrane pass occupies residues 119 to 139 (ITHLIFSINLFGSIFFLACMS). Residues 140-162 (VDRYLSITYFTGTSSYKKKMVRR) lie on the Cytoplasmic side of the membrane. The chain crosses the membrane as a helical span at residues 163–183 (VVCILVWLLAFFVSLPDTYYL). Over 184–213 (KTVTSASNNETYCRSFYPEHSIKEWLIGME) the chain is Extracellular. A helical transmembrane segment spans residues 214–234 (LVSVILGFAVPFTIIAIFYFL). Residues 235-252 (LARAMSASGDQEKHSSRK) lie on the Cytoplasmic side of the membrane. Residues 253–273 (IIFSYVVVFLVCWLPYHFVVL) form a helical membrane-spanning segment. Over 274-296 (LDIFSILHYIPFTCQLENVLFTA) the chain is Extracellular. Residues 297 to 319 (LHVTQCLSLVHCCVNPVLYSFIN) traverse the membrane as a helical segment. The Cytoplasmic portion of the chain corresponds to 320 to 362 (RNYRYELMKAFIFKYSAKTGLTKLIDASRVSETEYSALEQNTK). The interval 324-362 (YELMKAFIFKYSAKTGLTKLIDASRVSETEYSALEQNTK) is C-terminal cytoplasmic tail. Phosphoserine is present on residues Ser-347, Ser-350, and Ser-355.

Belongs to the G-protein coupled receptor 1 family. Atypical chemokine receptor subfamily. In terms of assembly, homodimer. Can form heterodimers with CXCR4; heterodimerization may regulate CXCR4 signaling activity. Interacts with ARRB1 and ARRB2. In terms of processing, the Ser/Thr residues in the C-terminal cytoplasmic tail may be phosphorylated. Ubiquitinated at the Lys residues in its C-terminal cytoplasmic tail and is essential for correct trafficking from and to the cell membrane. Deubiquitinated by CXCL12-stimulation in a reversible manner. In terms of tissue distribution, not detected in blood, liver, lung and heart, but high expression detected in several tumor cell lines (at protein level). Expressed in heart, spleen, kidney, lung, ovary, brain, testis, astrocytes, neutrophils and B-lymphocytes.

The protein resides in the cell membrane. It is found in the early endosome. Its subcellular location is the recycling endosome. Atypical chemokine receptor that controls chemokine levels and localization via high-affinity chemokine binding that is uncoupled from classic ligand-driven signal transduction cascades, resulting instead in chemokine sequestration, degradation, or transcytosis. Also known as interceptor (internalizing receptor) or chemokine-scavenging receptor or chemokine decoy receptor. Acts as a receptor for chemokines CXCL11 and CXCL12/SDF1. Chemokine binding does not activate G-protein-mediated signal transduction but instead induces beta-arrestin recruitment, leading to ligand internalization and activation of MAPK signaling pathway. Required for regulation of CXCR4 protein levels in migrating interneurons, thereby adapting their chemokine responsiveness. In glioma cells, transduces signals via MEK/ERK pathway, mediating resistance to apoptosis. Promotes cell growth and survival. Not involved in cell migration, adhesion or proliferation of normal hematopoietic progenitors but activated by CXCL11 in malignant hemapoietic cells, leading to phosphorylation of ERK1/2 (MAPK3/MAPK1) and enhanced cell adhesion and migration. Plays a regulatory role in CXCR4-mediated activation of cell surface integrins by CXCL12. Required for heart valve development. Regulates axon guidance in the oculomotor system through the regulation of CXCL12 levels. This is Atypical chemokine receptor 3 from Mus musculus (Mouse).